A 235-amino-acid polypeptide reads, in one-letter code: tRNA (guanine-N(1)-)-methyltransferase (235 aa).

Residues Gly112 and 132 to 137 (IGDYVL) contribute to the S-adenosyl-L-methionine site.

Belongs to the RNA methyltransferase TrmD family. As to quaternary structure, homodimer.

It is found in the cytoplasm. It carries out the reaction guanosine(37) in tRNA + S-adenosyl-L-methionine = N(1)-methylguanosine(37) in tRNA + S-adenosyl-L-homocysteine + H(+). Its function is as follows. Specifically methylates guanosine-37 in various tRNAs. This Cytophaga hutchinsonii (strain ATCC 33406 / DSM 1761 / CIP 103989 / NBRC 15051 / NCIMB 9469 / D465) protein is tRNA (guanine-N(1)-)-methyltransferase.